The primary structure comprises 151 residues: Lectin-like protein BA14k (151 aa).

Positions 1 to 26 (MNIFKQTCVGAFAVIFGATSIAPTMA) are cleaved as a signal peptide. Residues 83-103 (GWWYPLAAFGAGAIIGGAVSQ) traverse the membrane as a helical segment.

Belongs to the BA14k family.

The protein localises to the cell membrane. Has immunoglobulin-binding and hemagglutination properties, and can bind to mannose. Essential for virulence. May be involved in LPS biosynthesis or polysaccharide transport. The protein is Lectin-like protein BA14k of Brucella anthropi (strain ATCC 49188 / DSM 6882 / CCUG 24695 / JCM 21032 / LMG 3331 / NBRC 15819 / NCTC 12168 / Alc 37) (Ochrobactrum anthropi).